The primary structure comprises 447 residues: Probable rhamnogalacturonase C (447 aa).

Residues Met-1 to Ala-19 form the signal peptide. Asn-37 and Asn-65 each carry an N-linked (GlcNAc...) asparagine glycan. The cysteines at positions 40 and 66 are disulfide-linked. Asp-217 acts as the Proton donor in catalysis. Cys-219 and Cys-236 form a disulfide bridge. N-linked (GlcNAc...) asparagine glycosylation is found at Asn-237 and Asn-252. The active site involves His-291. Asn-316 carries N-linked (GlcNAc...) asparagine glycosylation. Disulfide bonds link Cys-338-Cys-344 and Cys-366-Cys-375.

Belongs to the glycosyl hydrolase 28 family.

The protein resides in the secreted. In terms of biological role, pectinolytic enzymes consist of four classes of enzymes: pectine lyase, polygalacturonase, pectin methylesterase and rhamnogalacturonase. Hydrolyzes alpha-D-galacturonopyranosyl-(1,2)-alpha-L-rhamnopyranosyl linkages in the backbone of the hairy regions of pectins. This Aspergillus flavus (strain ATCC 200026 / FGSC A1120 / IAM 13836 / NRRL 3357 / JCM 12722 / SRRC 167) protein is Probable rhamnogalacturonase C (rhgC).